Here is a 60-residue protein sequence, read N- to C-terminus: Large ribosomal subunit protein uL30 (60 aa).

The protein belongs to the universal ribosomal protein uL30 family. Part of the 50S ribosomal subunit.

In Leptothrix cholodnii (strain ATCC 51168 / LMG 8142 / SP-6) (Leptothrix discophora (strain SP-6)), this protein is Large ribosomal subunit protein uL30.